We begin with the raw amino-acid sequence, 126 residues long: Fluoride-specific ion channel FluC (126 aa).

The next 4 membrane-spanning stretches (helical) occupy residues Ser4–Leu24, Leu35–Phe55, Phe67–Ile87, and Phe97–Leu117. Residues Gly74 and Thr77 each coordinate Na(+).

The protein belongs to the fluoride channel Fluc/FEX (TC 1.A.43) family.

It is found in the cell inner membrane. The catalysed reaction is fluoride(in) = fluoride(out). With respect to regulation, na(+) is not transported, but it plays an essential structural role and its presence is essential for fluoride channel function. Functionally, fluoride-specific ion channel. Important for reducing fluoride concentration in the cell, thus reducing its toxicity. This Acinetobacter baylyi (strain ATCC 33305 / BD413 / ADP1) protein is Fluoride-specific ion channel FluC.